We begin with the raw amino-acid sequence, 268 residues long: Undecaprenyl-diphosphatase (268 aa).

7 helical membrane passes run F47–L67, F83–K103, L109–V129, Y144–V164, A184–F204, L218–L238, and F246–L266.

It belongs to the UppP family.

It is found in the cell inner membrane. The enzyme catalyses di-trans,octa-cis-undecaprenyl diphosphate + H2O = di-trans,octa-cis-undecaprenyl phosphate + phosphate + H(+). Its function is as follows. Catalyzes the dephosphorylation of undecaprenyl diphosphate (UPP). Confers resistance to bacitracin. In Bradyrhizobium sp. (strain BTAi1 / ATCC BAA-1182), this protein is Undecaprenyl-diphosphatase.